A 298-amino-acid polypeptide reads, in one-letter code: Probable alpha-L-glutamate ligase 2 (298 aa).

Positions 104 to 287 (MQLLSRQGIG…VADAIICFME (184 aa)) constitute an ATP-grasp domain. ATP-binding positions include lysine 141, 178 to 179 (EY), aspartate 187, and 211 to 213 (RSN). Residues aspartate 248, glutamate 260, and asparagine 262 each coordinate Mg(2+). 3 residues coordinate Mn(2+): aspartate 248, glutamate 260, and asparagine 262.

Belongs to the RimK family. It depends on Mg(2+) as a cofactor. Requires Mn(2+) as cofactor.

The chain is Probable alpha-L-glutamate ligase 2 from Shewanella frigidimarina (strain NCIMB 400).